We begin with the raw amino-acid sequence, 199 residues long: Large ribosomal subunit protein bL25 (199 aa).

It belongs to the bacterial ribosomal protein bL25 family. CTC subfamily. Part of the 50S ribosomal subunit; part of the 5S rRNA/L5/L18/L25 subcomplex. Contacts the 5S rRNA. Binds to the 5S rRNA independently of L5 and L18.

Its function is as follows. This is one of the proteins that binds to the 5S RNA in the ribosome where it forms part of the central protuberance. The chain is Large ribosomal subunit protein bL25 from Syntrophobacter fumaroxidans (strain DSM 10017 / MPOB).